The chain runs to 337 residues: GCPQGSISGPYMWNLCMNGLLDRLSAMNERIVAYADDLMIVANGNSRMEMERMADECMRIVYEWGREVGVSISEKKTVCIMLKGKLNVDGRRMRVAVAEGTISSIGYVKSARYLGVCMGERMSFADDIRGLITKVMGAIGGLRRVMRKEWGVKKKTAYTWAKGLLLAGVMYGSSVWYEGMKYKTMRESMNSIQRCAMYACLRVCRTVSTEAMQVLLGWLPCDLECVKDKCVQGSAWHRNDESDLVTDAEIAEKRARSCKLMKEREHEIWQRRWCESTKGRVMHEWLCDVNFACERMWFEPSLRVGYILTGHGTLNAWLYDRDPLDSAACPCGAPRED.

A Reverse transcriptase domain is found at 1–118; it reads GCPQGSISGP…KSARYLGVCM (118 aa). The segment at 253–337 is nucleic acid-binding endonuclease; the sequence is KRARSCKLMK…ACPCGAPRED (85 aa).

The enzyme catalyses DNA(n) + a 2'-deoxyribonucleoside 5'-triphosphate = DNA(n+1) + diphosphate. In Nasonia vitripennis (Parasitic wasp), this protein is Retrovirus-related Pol polyprotein from type-1 retrotransposable element R1.